The sequence spans 176 residues: ATP synthase subunit delta (176 aa).

The protein belongs to the ATPase delta chain family. As to quaternary structure, F-type ATPases have 2 components, F(1) - the catalytic core - and F(0) - the membrane proton channel. F(1) has five subunits: alpha(3), beta(3), gamma(1), delta(1), epsilon(1). F(0) has three main subunits: a(1), b(2) and c(10-14). The alpha and beta chains form an alternating ring which encloses part of the gamma chain. F(1) is attached to F(0) by a central stalk formed by the gamma and epsilon chains, while a peripheral stalk is formed by the delta and b chains.

The protein localises to the cell inner membrane. Functionally, f(1)F(0) ATP synthase produces ATP from ADP in the presence of a proton or sodium gradient. F-type ATPases consist of two structural domains, F(1) containing the extramembraneous catalytic core and F(0) containing the membrane proton channel, linked together by a central stalk and a peripheral stalk. During catalysis, ATP synthesis in the catalytic domain of F(1) is coupled via a rotary mechanism of the central stalk subunits to proton translocation. In terms of biological role, this protein is part of the stalk that links CF(0) to CF(1). It either transmits conformational changes from CF(0) to CF(1) or is implicated in proton conduction. This chain is ATP synthase subunit delta, found in Nitratiruptor sp. (strain SB155-2).